The following is a 220-amino-acid chain: Nucleolar protein 12 (220 aa).

Residues 31-86 adopt a coiled-coil conformation; it reads HKRKMQRRKTAVEEIKRKIKEEQKKMKEERHKEYMKMLKEREEALCELEENDELEE. The interval 109–220 is disordered; that stretch reads ISDLDLSGIR…QTGKTRRRRN (112 aa). Basic and acidic residues predominate over residues 139 to 148; that stretch reads EKGADEEKPK. 2 stretches are compositionally biased toward basic residues: residues 176–186 and 205–220; these read RSQRKSGKRPS and KTQR…RRRN.

The protein belongs to the RRP17 family.

It localises to the nucleus. The protein resides in the nucleolus. In terms of biological role, may bind to rRNA. This Xenopus laevis (African clawed frog) protein is Nucleolar protein 12 (nol12).